The following is an 89-amino-acid chain: Small ribosomal subunit protein uS15 (89 aa).

It belongs to the universal ribosomal protein uS15 family. Part of the 30S ribosomal subunit. Forms a bridge to the 50S subunit in the 70S ribosome, contacting the 23S rRNA.

Functionally, one of the primary rRNA binding proteins, it binds directly to 16S rRNA where it helps nucleate assembly of the platform of the 30S subunit by binding and bridging several RNA helices of the 16S rRNA. In terms of biological role, forms an intersubunit bridge (bridge B4) with the 23S rRNA of the 50S subunit in the ribosome. In Prosthecochloris aestuarii (strain DSM 271 / SK 413), this protein is Small ribosomal subunit protein uS15.